Here is a 1036-residue protein sequence, read N- to C-terminus: MSLKSEHRVNTSALQKIAADMSNLIDNLDTRELHFEGEEVEFDTSPGDPKAQEKYIPFSSIYNTQGFKEPNIQTYLSGCPIKAQVLEVERFTSTTRVPSINLYTIELTHGEFTWQVKRKFKHFQEFHRELLKYKAFIRIPIPTKRHTFRRQNVKEEPREMPSLPRSSENTIQEEQFFGRRKQLEDYLTKILKMPMYRNYHATTEFLDVSQLSFIHDLGPKGLEGMIMKRSGGHRIPGLNCCGQGRACYRWSKRWLIVKDSFLLYMKPDSGAIAFVLLVDKEFRIKVGRKETETKYGLRIDNLSRTLILKCNSYRHARWWGGAIEEFIQKHGSDFLKDHRFGSYAAVHENMLAKWYVNAKGYFEDIANAMEEAAEEIFITDWWLSPEIFLKRPVVEGNRWRLDCILKRKAQQGVRIFIMLYKEVELALGINSEYSKRTLMRLHPNIKVMRHPDHVSSSVYLWAHHEKLVIIDQSVAFVGGIDLAYGRWDDNEHRLTDVGSVKRVTSGLSMGSLAAATMESMESLSLKDNHRSHKNEPILKSVDDVDPKLKGVGKPRKFSKFSLYRQLHRRHLHNSDSVSSIDSASNTGSIRSVQTGVGELHGETRFWHGKDYCNFVFKDWVQLDKPFADFIDRYSTPRIPWHDIGSVLHGKAARDVARHFIQRWNFTKIMKPKYRSLSYPFLLPKSQSTAHELRYQVPGAVPAKVQLLRSAADWSAGIKHHEESIHSAYINVIENSKHYIYIENQFFISCADDKVVFNKVGDAIAQRILKAHREGQRYRVYIVIPRLPGFEGDISTGGGNALQAIMHFNYRTMCRGENSILGQLKPELGNQWINYISFCGLRTHAELEGNLVTELIYVHSKLLIADDNTVIIGSANINDRSMLGKRDSEMAVIVQDTETVPSIMDGKEYQAGCFAQGLRLQCFRLVLGYLSDPSEDLQDPVSDKFFKEIWVSTAARNATIYDKVFRCLPNDEVHNLMQLRDFISKPILAKDDPIRAEEELRKIRGFLVQFPFYFLSEENLLPSVGTKEAIVPMEVWT.

Positions 81–212 (IKAQVLEVER…TEFLDVSQLS (132 aa)) constitute a PX domain. Positions 219 to 328 (PKGLEGMIMK…WGGAIEEFIQ (110 aa)) constitute a PH domain. Residues Cys240 and Cys241 are each lipidated (S-palmitoyl cysteine). Positions 459 to 486 (YLWAHHEKLVIIDQSVAFVGGIDLAYGR) constitute a PLD phosphodiesterase 1 domain. The catalytic stretch occupies residues 463–890 (HHEKLVIIDQ…MLGKRDSEMA (428 aa)). Phosphoserine is present on residues Ser499, Ser561, and Ser591. One can recognise a PLD phosphodiesterase 2 domain in the interval 853–880 (ELIYVHSKLLIADDNTVIIGSANINDRS).

It belongs to the phospholipase D family. Interacts with PIP5K1B.

Its subcellular location is the cytoplasm. It is found in the perinuclear region. It localises to the endoplasmic reticulum membrane. The protein localises to the golgi apparatus membrane. The protein resides in the late endosome membrane. The enzyme catalyses a 1,2-diacyl-sn-glycero-3-phosphocholine + H2O = a 1,2-diacyl-sn-glycero-3-phosphate + choline + H(+). With respect to regulation, stimulated by phosphatidylinositol 4,5-bisphosphate and phosphatidylinositol 3,4,5-trisphosphate, activated by the phosphokinase C-alpha, by the ADP-ribosylation factor-1 (ARF-1), and to a lesser extent by GTP-binding proteins: RHO A, RAC-1 and CDC42. Functionally, implicated as a critical step in numerous cellular pathways, including signal transduction, membrane trafficking, and the regulation of mitosis. May be involved in the regulation of perinuclear intravesicular membrane traffic. The polypeptide is Phospholipase D1 (PLD1) (Cricetulus griseus (Chinese hamster)).